A 542-amino-acid chain; its full sequence is Putative leucine aminopeptidase 1 (542 aa).

Mn(2+) contacts are provided by Lys-294 and Asp-299. The active site involves Lys-323. Positions 336, 396, and 398 each coordinate Mn(2+). Arg-400 is an active-site residue.

It belongs to the peptidase M17 family. In terms of assembly, homohexamer (dimer of homotrimers). Mn(2+) is required as a cofactor.

It is found in the cytoplasm. The enzyme catalyses Release of an N-terminal amino acid, Xaa-|-Yaa-, in which Xaa is preferably Leu, but may be other amino acids including Pro although not Arg or Lys, and Yaa may be Pro. Amino acid amides and methyl esters are also readily hydrolyzed, but rates on arylamides are exceedingly low.. It carries out the reaction Release of N-terminal proline from a peptide.. Functionally, presumably involved in the processing and regular turnover of intracellular proteins. Catalyzes the removal of unsubstituted N-terminal amino acids from various peptides. The protein is Putative leucine aminopeptidase 1 of Oryza sativa subsp. japonica (Rice).